The chain runs to 99 residues: Large ribosomal subunit protein bL27 (99 aa).

Residues Met1–Phe9 constitute a propeptide that is removed on maturation.

It belongs to the bacterial ribosomal protein bL27 family. The N-terminus is cleaved by ribosomal processing cysteine protease Prp.

The sequence is that of Large ribosomal subunit protein bL27 from Clostridium novyi (strain NT).